The following is a 753-amino-acid chain: 5-methyltetrahydropteroyltriglutamate--homocysteine methyltransferase (753 aa).

Residues 17–20 (RELK) and K117 each bind 5-methyltetrahydropteroyltri-L-glutamate. Residues 431–433 (IGS) and E484 contribute to the L-homocysteine site. Residues 431 to 433 (IGS) and E484 contribute to the L-methionine site. 5-methyltetrahydropteroyltri-L-glutamate is bound by residues 515–516 (RC) and W561. Residue D599 participates in L-homocysteine binding. D599 serves as a coordination point for L-methionine. 5-methyltetrahydropteroyltri-L-glutamate is bound at residue E605. Residues H641, C643, and E665 each contribute to the Zn(2+) site. H694 serves as the catalytic Proton donor. Zn(2+) is bound at residue C726.

It belongs to the vitamin-B12 independent methionine synthase family. The cofactor is Zn(2+).

It catalyses the reaction 5-methyltetrahydropteroyltri-L-glutamate + L-homocysteine = tetrahydropteroyltri-L-glutamate + L-methionine. Its pathway is amino-acid biosynthesis; L-methionine biosynthesis via de novo pathway; L-methionine from L-homocysteine (MetE route): step 1/1. Functionally, catalyzes the transfer of a methyl group from 5-methyltetrahydrofolate to homocysteine resulting in methionine formation. This chain is 5-methyltetrahydropteroyltriglutamate--homocysteine methyltransferase, found in Enterobacter sp. (strain 638).